The primary structure comprises 329 residues: Sex comb on midleg-like protein 1 (329 aa).

Phosphoserine occurs at positions 138 and 238. Positions 138–157 (SPTLPVSRRENNSPSNLPRP) are disordered. An SAM domain is found at 258–325 (WSVEAVVLFL…YYIDRLKQGK (68 aa)).

The protein belongs to the SCM family. As to expression, ubiquitous. Expressed in fetal and adult tissues.

It localises to the nucleus. Its function is as follows. Putative Polycomb group (PcG) protein. PcG proteins act by forming multiprotein complexes, which are required to maintain the transcriptionally repressive state of homeotic genes throughout development. May be involved in spermatogenesis during sexual maturation. This Homo sapiens (Human) protein is Sex comb on midleg-like protein 1 (SCML1).